The chain runs to 138 residues: MAKSKMLDLRNLSVDELIKTNESKRAELFALKFQAAVGSLEQTHRIKEIKKEIARIELALSEKRLSGENTNKVIKADYNKAVEEAEKAGKEVRAKQRKFLEEQYGQQSQTKVNEADIQKAMQAAEQETVEPDTKGETK.

Residues 1–79 (MAKSKMLDLR…TNKVIKADYN (79 aa)) form a large ribosomal subunit protein uL29 region. Residues 80-138 (KAVEEAEKAGKEVRAKQRKFLEEQYGQQSQTKVNEADIQKAMQAAEQETVEPDTKGETK) form a unknown region. Positions 103–138 (QYGQQSQTKVNEADIQKAMQAAEQETVEPDTKGETK) are disordered.

Belongs to the universal ribosomal protein uL29 family.

In Mycoplasma capricolum subsp. capricolum (strain California kid / ATCC 27343 / NCTC 10154), this protein is Large ribosomal subunit protein uL29.